The chain runs to 195 residues: Aminoglycoside 2'-N-acetyltransferase (195 aa).

One can recognise an N-acetyltransferase domain in the interval 21-180 (VHTSDLDQET…VGLPAGMELD (160 aa)). Substrate contacts are provided by residues aspartate 45 and 92–93 (EA). CoA contacts are provided by residues 94-96 (VAV) and 101-106 (RGQGLA). Residues serine 127 and 161–162 (ED) each bind substrate.

This sequence belongs to the AAC(2')-I acetyltransferase family. In terms of assembly, homodimer.

Functionally, confers resistance to gentamicin, tobramycin, dibekacin, netilmicin, and 6'-N-ethylnetilmicin. The polypeptide is Aminoglycoside 2'-N-acetyltransferase (aac) (Mycolicibacterium fortuitum (Mycobacterium fortuitum)).